A 327-amino-acid chain; its full sequence is Malate dehydrogenase (327 aa).

Residue 11–17 (GAAGQIG) coordinates NAD(+). 2 residues coordinate substrate: Arg92 and Arg98. Residues Asn105, Gln112, and 129 to 131 (VGN) contribute to the NAD(+) site. Residues Asn131 and Arg162 each contribute to the substrate site. His187 (proton acceptor) is an active-site residue.

The protein belongs to the LDH/MDH superfamily. MDH type 2 family.

It catalyses the reaction (S)-malate + NAD(+) = oxaloacetate + NADH + H(+). Its function is as follows. Catalyzes the reversible oxidation of malate to oxaloacetate. The protein is Malate dehydrogenase of Thermus thermophilus (strain ATCC BAA-163 / DSM 7039 / HB27).